Reading from the N-terminus, the 431-residue chain is Glutamate-1-semialdehyde 2,1-aminomutase (431 aa).

Residue lysine 265 is modified to N6-(pyridoxal phosphate)lysine.

It belongs to the class-III pyridoxal-phosphate-dependent aminotransferase family. HemL subfamily. As to quaternary structure, homodimer. The cofactor is pyridoxal 5'-phosphate.

It is found in the cytoplasm. The catalysed reaction is (S)-4-amino-5-oxopentanoate = 5-aminolevulinate. The protein operates within porphyrin-containing compound metabolism; protoporphyrin-IX biosynthesis; 5-aminolevulinate from L-glutamyl-tRNA(Glu): step 2/2. The protein is Glutamate-1-semialdehyde 2,1-aminomutase of Vibrio vulnificus (strain YJ016).